A 490-amino-acid chain; its full sequence is Betaine aldehyde dehydrogenase (490 aa).

Aspartate 93 lines the K(+) pocket. 150 to 152 (GAW) contacts NAD(+). Catalysis depends on lysine 162, which acts as the Charge relay system. 176-179 (KPSE) is an NAD(+) binding site. Valine 180 contacts K(+). Residue 230-233 (GIAS) participates in NAD(+) binding. Leucine 246 is a K(+) binding site. Glutamate 252 (proton acceptor) is an active-site residue. The NAD(+) site is built by glycine 254, cysteine 286, and glutamate 387. Catalysis depends on cysteine 286, which acts as the Nucleophile. Cysteine 286 carries the post-translational modification Cysteine sulfenic acid (-SOH). Residues lysine 457 and glycine 460 each coordinate K(+). The active-site Charge relay system is glutamate 464.

It belongs to the aldehyde dehydrogenase family. In terms of assembly, dimer of dimers. K(+) is required as a cofactor.

It carries out the reaction betaine aldehyde + NAD(+) + H2O = glycine betaine + NADH + 2 H(+). It participates in amine and polyamine biosynthesis; betaine biosynthesis via choline pathway; betaine from betaine aldehyde: step 1/1. Functionally, involved in the biosynthesis of the osmoprotectant glycine betaine. Catalyzes the irreversible oxidation of betaine aldehyde to the corresponding acid. The chain is Betaine aldehyde dehydrogenase from Yersinia pestis.